The primary structure comprises 4306 residues: Cytoplasmic dynein 2 heavy chain 1 (4306 aa).

The interval 1–1650 (MAGSLGDVRK…YVQMVDSELQ (1650 aa)) is stem. Residue 145–152 (LGIVLRKS) participates in ATP binding. Residues 669–696 (KELEGYIQKLQNAAERLATENRRLRKWH) are a coiled coil. AAA stretches follow at residues 1651–1875 (YTYE…VLRG), 1941–2161 (SALK…KQND), 2249–2505 (LTAD…WVLG), and 2617–2862 (HYGR…ESCK). Residues 1689 to 1696 (GPAGTGKT), 1979 to 1986 (GPSGAGKS), 2291 to 2298 (GPEGCGKG), and 2655 to 2662 (GRSGVGRR) contribute to the ATP site. The tract at residues 2880-3168 (AISSSKKKEL…AEVSKAQETI (289 aa)) is stalk. 3 coiled-coil regions span residues 2896 to 2981 (LQAG…KEVQ), 3108 to 3199 (LETE…LATL), and 3407 to 3441 (IQHE…SLLE). AAA stretches follow at residues 3243 to 3472 (LCTE…LIQD) and 3689 to 3904 (MALF…VIDR).

Belongs to the dynein heavy chain family. The cytoplasmic dynein complex 2 is probably composed by a heavy chain DYNC2H1 homodimer and a number of DYNC2LI1 light intermediate chains. In terms of tissue distribution, detected in brain, lung, spleen and kidney (at protein level). Enriched in the ependymal layer lining the lateral ventricles (at protein level).

The protein resides in the cytoplasm. It localises to the cytoskeleton. Its subcellular location is the cilium axoneme. It is found in the cell membrane. In terms of biological role, may function as a motor for intraflagellar retrograde transport. Functions in cilia biogenesis. According to PubMed:8666668, it may play a role in transport between endoplasmic reticulum and Golgi or organization of the Golgi in cells. This is Cytoplasmic dynein 2 heavy chain 1 (Dync2h1) from Mus musculus (Mouse).